The chain runs to 380 residues: Erythronate-4-phosphate dehydrogenase (380 aa).

Residues S45 and T66 each coordinate substrate. NAD(+) is bound by residues D146, T174, 205-207 (ASR), and D231. R207 is a catalytic residue. Residue E236 is part of the active site. H253 acts as the Proton donor in catalysis. Residue G256 coordinates NAD(+). Y257 is a binding site for substrate.

This sequence belongs to the D-isomer specific 2-hydroxyacid dehydrogenase family. PdxB subfamily. As to quaternary structure, homodimer.

The protein localises to the cytoplasm. It catalyses the reaction 4-phospho-D-erythronate + NAD(+) = (R)-3-hydroxy-2-oxo-4-phosphooxybutanoate + NADH + H(+). Its pathway is cofactor biosynthesis; pyridoxine 5'-phosphate biosynthesis; pyridoxine 5'-phosphate from D-erythrose 4-phosphate: step 2/5. Its function is as follows. Catalyzes the oxidation of erythronate-4-phosphate to 3-hydroxy-2-oxo-4-phosphonooxybutanoate. In Pseudomonas putida (strain W619), this protein is Erythronate-4-phosphate dehydrogenase.